Here is a 304-residue protein sequence, read N- to C-terminus: Homoserine O-acetyltransferase (304 aa).

Cys-142 functions as the Acyl-thioester intermediate in the catalytic mechanism. Substrate is bound by residues Lys-163 and Ser-191. The Proton acceptor role is filled by His-234. Glu-236 is an active-site residue. Arg-248 serves as a coordination point for substrate.

It belongs to the MetA family.

The protein resides in the cytoplasm. It catalyses the reaction L-homoserine + acetyl-CoA = O-acetyl-L-homoserine + CoA. It functions in the pathway amino-acid biosynthesis; L-methionine biosynthesis via de novo pathway; O-acetyl-L-homoserine from L-homoserine: step 1/1. Transfers an acetyl group from acetyl-CoA to L-homoserine, forming acetyl-L-homoserine. This chain is Homoserine O-acetyltransferase, found in Thermotoga petrophila (strain ATCC BAA-488 / DSM 13995 / JCM 10881 / RKU-1).